The following is a 51-amino-acid chain: Insulin (51 aa).

3 cysteine pairs are disulfide-bonded: Cys7–Cys37, Cys19–Cys50, and Cys36–Cys41.

It belongs to the insulin family. Heterodimer of a B chain and an A chain linked by two disulfide bonds.

It is found in the secreted. Functionally, insulin decreases blood glucose concentration. It increases cell permeability to monosaccharides, amino acids and fatty acids. It accelerates glycolysis, the pentose phosphate cycle, and glycogen synthesis in liver. In Hystrix cristata (North African crested porcupine), this protein is Insulin (INS).